The sequence spans 85 residues: CRISPR-associated endoribonuclease Cas2 2 (85 aa).

Residue aspartate 8 participates in Mg(2+) binding.

This sequence belongs to the CRISPR-associated endoribonuclease Cas2 protein family. Homodimer, forms a heterotetramer with a Cas1 homodimer. It depends on Mg(2+) as a cofactor.

CRISPR (clustered regularly interspaced short palindromic repeat), is an adaptive immune system that provides protection against mobile genetic elements (viruses, transposable elements and conjugative plasmids). CRISPR clusters contain sequences complementary to antecedent mobile elements and target invading nucleic acids. CRISPR clusters are transcribed and processed into CRISPR RNA (crRNA). Functions as a ssRNA-specific endoribonuclease. Involved in the integration of spacer DNA into the CRISPR cassette. This is CRISPR-associated endoribonuclease Cas2 2 from Chloroflexus aurantiacus (strain ATCC 29366 / DSM 635 / J-10-fl).